A 469-amino-acid chain; its full sequence is 3-isopropylmalate dehydratase large subunit (469 aa).

Positions 349, 409, and 412 each coordinate [4Fe-4S] cluster.

It belongs to the aconitase/IPM isomerase family. LeuC type 1 subfamily. As to quaternary structure, heterodimer of LeuC and LeuD. It depends on [4Fe-4S] cluster as a cofactor.

The catalysed reaction is (2R,3S)-3-isopropylmalate = (2S)-2-isopropylmalate. It functions in the pathway amino-acid biosynthesis; L-leucine biosynthesis; L-leucine from 3-methyl-2-oxobutanoate: step 2/4. Functionally, catalyzes the isomerization between 2-isopropylmalate and 3-isopropylmalate, via the formation of 2-isopropylmaleate. In Methylorubrum extorquens (strain CM4 / NCIMB 13688) (Methylobacterium extorquens), this protein is 3-isopropylmalate dehydratase large subunit.